Here is an 80-residue protein sequence, read N- to C-terminus: Mu-conotoxin BuIIIC (80 aa).

Residues 1-22 (MMSKLGVLLTICLLLFPLFALP) form the signal peptide. A propeptide spanning residues 23–51 (QDGDQPADRPAERMQDDLSSEQHPLFEKR) is cleaved from the precursor. Cystine bridges form between Cys-56/Cys-70, Cys-57/Cys-76, and Cys-66/Cys-77. Position 77 is a cysteine amide (Cys-77).

It belongs to the conotoxin M superfamily. Expressed by the venom duct.

The protein resides in the secreted. Its function is as follows. Mu-conotoxins block voltage-gated sodium channels. Extremely potent inhibitor of Nav1.4/SCN4A (96% inhibition at 1 uM). The inhibition is very slowly reversible. The polypeptide is Mu-conotoxin BuIIIC (Conus bullatus (Bubble cone)).